Here is a 745-residue protein sequence, read N- to C-terminus: Prolyl oligopeptidase ophP (745 aa).

Catalysis depends on charge relay system residues Ser580, Asp665, and His701.

This sequence belongs to the peptidase S9A family. As to quaternary structure, monomer.

It catalyses the reaction Hydrolysis of Pro-|-Xaa &gt;&gt; Ala-|-Xaa in oligopeptides.. Its pathway is mycotoxin biosynthesis. Its function is as follows. Prolyl oligopeptidase; part of the gene cluster that mediates the biosynthesis of omphalotin A, a highly methylated cyclic dodecapeptide with nematodicidal activity. Excises and catalyzes the macrocyclization of the methylated core peptide of OphMA to yield omphalotin A. OphP works in a two-step fashion with an initial cleavage at the N-terminus, followed by a second cleavage at the C-terminus of the core peptide. According to this mechanism, the free N-terminus of the core peptide, generated by the first cleavage, attacks the covalent intermediate of the second cleavage, which results in macrocyclization of the core peptide. In Omphalotus olearius (Jack o'lantern), this protein is Prolyl oligopeptidase ophP.